Reading from the N-terminus, the 92-residue chain is DNA-directed RNA polymerase subunit Rpo11 (92 aa).

The protein belongs to the archaeal Rpo11/eukaryotic RPB11/RPC19 RNA polymerase subunit family. Part of the RNA polymerase complex.

It is found in the cytoplasm. It catalyses the reaction RNA(n) + a ribonucleoside 5'-triphosphate = RNA(n+1) + diphosphate. Functionally, DNA-dependent RNA polymerase (RNAP) catalyzes the transcription of DNA into RNA using the four ribonucleoside triphosphates as substrates. This is DNA-directed RNA polymerase subunit Rpo11 from Pyrobaculum aerophilum (strain ATCC 51768 / DSM 7523 / JCM 9630 / CIP 104966 / NBRC 100827 / IM2).